Here is a 355-residue protein sequence, read N- to C-terminus: Methylthioribose-1-phosphate isomerase (355 aa).

Substrate contacts are provided by residues 50-52 (RGA), arginine 93, and glutamine 198. The Proton donor role is filled by aspartate 239. Residue 249–250 (NK) participates in substrate binding.

Belongs to the eIF-2B alpha/beta/delta subunits family. MtnA subfamily. Homodimer.

The enzyme catalyses 5-(methylsulfanyl)-alpha-D-ribose 1-phosphate = 5-(methylsulfanyl)-D-ribulose 1-phosphate. It functions in the pathway amino-acid biosynthesis; L-methionine biosynthesis via salvage pathway; L-methionine from S-methyl-5-thio-alpha-D-ribose 1-phosphate: step 1/6. Its function is as follows. Catalyzes the interconversion of methylthioribose-1-phosphate (MTR-1-P) into methylthioribulose-1-phosphate (MTRu-1-P). In Geobacillus kaustophilus (strain HTA426), this protein is Methylthioribose-1-phosphate isomerase.